Consider the following 476-residue polypeptide: Argininosuccinate lyase (476 aa).

This sequence belongs to the lyase 1 family. Argininosuccinate lyase subfamily.

It is found in the cytoplasm. The catalysed reaction is 2-(N(omega)-L-arginino)succinate = fumarate + L-arginine. The protein operates within amino-acid biosynthesis; L-arginine biosynthesis; L-arginine from L-ornithine and carbamoyl phosphate: step 3/3. The chain is Argininosuccinate lyase from Leptothrix cholodnii (strain ATCC 51168 / LMG 8142 / SP-6) (Leptothrix discophora (strain SP-6)).